We begin with the raw amino-acid sequence, 356 residues long: UDP-N-acetylglucosamine--N-acetylmuramyl-(pentapeptide) pyrophosphoryl-undecaprenol N-acetylglucosamine transferase (356 aa).

Residues Arg-166, Ser-196, and Gln-290 each contribute to the UDP-N-acetyl-alpha-D-glucosamine site.

Belongs to the glycosyltransferase 28 family. MurG subfamily.

It is found in the cell membrane. It catalyses the reaction Mur2Ac(oyl-L-Ala-gamma-D-Glu-L-Lys-D-Ala-D-Ala)-di-trans,octa-cis-undecaprenyl diphosphate + UDP-N-acetyl-alpha-D-glucosamine = beta-D-GlcNAc-(1-&gt;4)-Mur2Ac(oyl-L-Ala-gamma-D-Glu-L-Lys-D-Ala-D-Ala)-di-trans,octa-cis-undecaprenyl diphosphate + UDP + H(+). It functions in the pathway cell wall biogenesis; peptidoglycan biosynthesis. Cell wall formation. Catalyzes the transfer of a GlcNAc subunit on undecaprenyl-pyrophosphoryl-MurNAc-pentapeptide (lipid intermediate I) to form undecaprenyl-pyrophosphoryl-MurNAc-(pentapeptide)GlcNAc (lipid intermediate II). The polypeptide is UDP-N-acetylglucosamine--N-acetylmuramyl-(pentapeptide) pyrophosphoryl-undecaprenol N-acetylglucosamine transferase (Staphylococcus aureus (strain MW2)).